Reading from the N-terminus, the 471-residue chain is UDP-N-acetylmuramoylalanine--D-glutamate ligase (471 aa).

127 to 133 (GSNGKST) is an ATP binding site.

Belongs to the MurCDEF family.

Its subcellular location is the cytoplasm. It catalyses the reaction UDP-N-acetyl-alpha-D-muramoyl-L-alanine + D-glutamate + ATP = UDP-N-acetyl-alpha-D-muramoyl-L-alanyl-D-glutamate + ADP + phosphate + H(+). Its pathway is cell wall biogenesis; peptidoglycan biosynthesis. Functionally, cell wall formation. Catalyzes the addition of glutamate to the nucleotide precursor UDP-N-acetylmuramoyl-L-alanine (UMA). This Colwellia psychrerythraea (strain 34H / ATCC BAA-681) (Vibrio psychroerythus) protein is UDP-N-acetylmuramoylalanine--D-glutamate ligase.